The primary structure comprises 257 residues: Uroplakin-1a (257 aa).

Topologically, residues 1–13 are cytoplasmic; sequence MASAATEGEKGSP. Residues 14 to 34 traverse the membrane as a helical segment; that stretch reads VVVGLLVVGNIIILLSGLALF. The Extracellular portion of the chain corresponds to 35-58; the sequence is AETVWVTADQYRVYPLMGVSGKDD. Residues 59–85 form a helical membrane-spanning segment; sequence VFAGAWIAIFCGFSFFVVASFGVGAAL. Residues 86–90 lie on the Cytoplasmic side of the membrane; that stretch reads CRRRY. A helical membrane pass occupies residues 91 to 111; it reads MILTYLLLMLIVYIFECASCI. Topologically, residues 112–229 are extracellular; that stretch reads TSYTHRDYMV…HIGHAIDSYT (118 aa). A glycan (N-linked (GlcNAc...) asparagine) is linked at N169. Residues 230–251 form a helical membrane-spanning segment; that stretch reads WGISWFGFAILMWTLPVMLIAM. At 252–257 the chain is on the cytoplasmic side; sequence YFYTTL.

This sequence belongs to the tetraspanin (TM4SF) family. Homodimer; disulfide-linked. Interacts with uroplakin-2 (UPK2). Binds to uropathogenic E.coli fimH.

It is found in the membrane. In terms of biological role, component of the asymmetric unit membrane (AUM); a highly specialized biomembrane elaborated by terminally differentiated urothelial cells. May play an important role in normal bladder epithelial physiology, possibly in regulating membrane permeability of superficial umbrella cells or in stabilizing the apical membrane through AUM/cytoskeletal interactions. In Mus musculus (Mouse), this protein is Uroplakin-1a (Upk1a).